A 154-amino-acid polypeptide reads, in one-letter code: Iron-sulfur cluster assembly 2 homolog, mitochondrial (154 aa).

A mitochondrion-targeting transit peptide spans 1–8; it reads MAASRALS. The Fe cation site is built by Cys-79, Cys-144, and Cys-146.

The protein belongs to the HesB/IscA family. In terms of assembly, heterotetramer; forms a dimer of dimers with IBA57. Interacts with [2Fe-2S]-ISCA2 forming the heterodimer [2Fe- 2S]-ISCA2-IBA57 complex; [2Fe-2S] cluster binding is absolutely required to promote the complex formation.

Its subcellular location is the mitochondrion. Involved in the maturation of mitochondrial 4Fe-4S proteins functioning late in the iron-sulfur cluster assembly pathway. May be involved in the binding of an intermediate of Fe/S cluster assembly. The protein is Iron-sulfur cluster assembly 2 homolog, mitochondrial (Isca2) of Mus musculus (Mouse).